Here is a 523-residue protein sequence, read N- to C-terminus: Ribonuclease Y (523 aa).

The helical transmembrane segment at 18 to 38 threads the bilayer; it reads WSLTVALVIGGALGFLVVWAF. Positions 213 to 276 constitute a KH domain; that stretch reads TSTIVSLPNE…EVARGALEAL (64 aa). Residues 339–432 enclose the HD domain; it reads VLDHSVETAS…VILADTISAT (94 aa).

The protein belongs to the RNase Y family.

Its subcellular location is the cell membrane. Endoribonuclease that initiates mRNA decay. The chain is Ribonuclease Y from Opitutus terrae (strain DSM 11246 / JCM 15787 / PB90-1).